Reading from the N-terminus, the 43-residue chain is uncharacterized protein (43 aa).

Belongs to the ELIP/psbS family.

Its subcellular location is the plastid. It is found in the chloroplast. In terms of biological role, possible role in chlorophyll and/or carotenoid binding. This is an uncharacterized protein from Cyanidium caldarium (Red alga).